We begin with the raw amino-acid sequence, 343 residues long: Selenide, water dikinase (343 aa).

The active site involves U16. Residue U16 is a non-standard amino acid, selenocysteine. ATP is bound by residues K19 and 46-48 (GAE). D49 is a Mg(2+) binding site. ATP is bound by residues D66, D89, and 137 to 139 (GHT). Residue D89 participates in Mg(2+) binding. D225 serves as a coordination point for Mg(2+).

This sequence belongs to the selenophosphate synthase 1 family. Class I subfamily. As to quaternary structure, homodimer. It depends on Mg(2+) as a cofactor.

The enzyme catalyses hydrogenselenide + ATP + H2O = selenophosphate + AMP + phosphate + 2 H(+). Synthesizes selenophosphate from selenide and ATP. The sequence is that of Selenide, water dikinase from Citrifermentans bemidjiense (strain ATCC BAA-1014 / DSM 16622 / JCM 12645 / Bem) (Geobacter bemidjiensis).